The sequence spans 370 residues: Popeye domain-containing 2 (370 aa).

A run of 2 helical transmembrane segments spans residues 51–71 and 78–98; these read ALYIFSFLAPAFLCLALWGWL and VFIWNLLLMLQCLAQVCHLIF. A disordered region spans residues 275–349; it reads PSPPGSEGGS…SGEDSTSLIL (75 aa). Over residues 283–294 the composition is skewed to low complexity; that stretch reads GSASSPPRGSLG. Composition is skewed to polar residues over residues 307-319 and 330-347; these read NPGSGTRNPQPDQ and QHWSSDTEMPSGEDSTSL.

The protein belongs to the popeye family. In terms of tissue distribution, expressed in the heart and, slightly, in skeletal muscle.

The protein resides in the membrane. It is found in the cell membrane. The protein localises to the sarcolemma. Important for striated muscle differentiation and cardiac morphogenesis. Is also required for cardiac conduction system development, plays a regulatory function in heart rate dynamics mediated, at least in part, through cAMP-binding. In Danio rerio (Zebrafish), this protein is Popeye domain-containing 2.